A 348-amino-acid chain; its full sequence is NADH-ubiquinone oxidoreductase chain 2 (348 aa).

11 helical membrane-spanning segments follow: residues 1–21, 23–43, 56–76, 92–112, 123–143, 148–168, 176–196, 198–218, 242–262, 272–292, and 321–341; these read MMTL…MFSS, WFFA…MMLF, YFIS…WNYF, ITLI…HFWL, MGLI…IQVS, NMYI…FGGL, LLAY…AVSA, LSWV…TILI, CILV…FLKL, SLIL…FFYL, and LLFN…PFMI.

This sequence belongs to the complex I subunit 2 family.

The protein localises to the mitochondrion inner membrane. It catalyses the reaction a ubiquinone + NADH + 5 H(+)(in) = a ubiquinol + NAD(+) + 4 H(+)(out). Core subunit of the mitochondrial membrane respiratory chain NADH dehydrogenase (Complex I) that is believed to belong to the minimal assembly required for catalysis. Complex I functions in the transfer of electrons from NADH to the respiratory chain. The immediate electron acceptor for the enzyme is believed to be ubiquinone. The polypeptide is NADH-ubiquinone oxidoreductase chain 2 (MT-ND2) (Myxine glutinosa (Atlantic hagfish)).